The primary structure comprises 308 residues: Aspartate carbamoyltransferase catalytic subunit (308 aa).

Carbamoyl phosphate contacts are provided by arginine 58 and threonine 59. Lysine 86 is a binding site for L-aspartate. Positions 108, 136, and 139 each coordinate carbamoyl phosphate. The L-aspartate site is built by arginine 169 and arginine 222. The carbamoyl phosphate site is built by glycine 264 and proline 265.

It belongs to the aspartate/ornithine carbamoyltransferase superfamily. ATCase family. As to quaternary structure, heterododecamer (2C3:3R2) of six catalytic PyrB chains organized as two trimers (C3), and six regulatory PyrI chains organized as three dimers (R2).

The catalysed reaction is carbamoyl phosphate + L-aspartate = N-carbamoyl-L-aspartate + phosphate + H(+). The protein operates within pyrimidine metabolism; UMP biosynthesis via de novo pathway; (S)-dihydroorotate from bicarbonate: step 2/3. In terms of biological role, catalyzes the condensation of carbamoyl phosphate and aspartate to form carbamoyl aspartate and inorganic phosphate, the committed step in the de novo pyrimidine nucleotide biosynthesis pathway. In Campylobacter hominis (strain ATCC BAA-381 / DSM 21671 / CCUG 45161 / LMG 19568 / NCTC 13146 / CH001A), this protein is Aspartate carbamoyltransferase catalytic subunit.